Here is a 422-residue protein sequence, read N- to C-terminus: Anhydromevalonate phosphate decarboxylase (422 aa).

2 residues coordinate Mn(2+): Asn-134 and Glu-197. The active-site Proton acceptor is Asp-244.

This sequence belongs to the UbiD family. It depends on prenylated FMN as a cofactor. Mn(2+) serves as cofactor.

It carries out the reaction (2E)-3-methyl-5-phosphooxypent-2-enoate + H(+) = isopentenyl phosphate + CO2. It functions in the pathway isoprenoid biosynthesis; isopentenyl diphosphate biosynthesis via mevalonate pathway. Functionally, catalyzes the conversion of trans-anhydromevalonate 5-phosphate (tAHMP) into isopentenyl phosphate. Involved in the archaeal mevalonate (MVA) pathway, which provides fundamental precursors for isoprenoid biosynthesis, such as isopentenyl diphosphate (IPP) and dimethylallyl diphosphate (DMAPP). The polypeptide is Anhydromevalonate phosphate decarboxylase (Methanosarcina mazei (strain ATCC BAA-159 / DSM 3647 / Goe1 / Go1 / JCM 11833 / OCM 88) (Methanosarcina frisia)).